Reading from the N-terminus, the 139-residue chain is Flagellar basal-body rod protein FlgC (139 aa).

It belongs to the flagella basal body rod proteins family. The basal body constitutes a major portion of the flagellar organelle and consists of four rings (L,P,S, and M) mounted on a central rod. The rod consists of about 26 subunits of FlgG in the distal portion, and FlgB, FlgC and FlgF are thought to build up the proximal portion of the rod with about 6 subunits each.

It localises to the bacterial flagellum basal body. This chain is Flagellar basal-body rod protein FlgC (flgC), found in Agrobacterium fabrum (strain C58 / ATCC 33970) (Agrobacterium tumefaciens (strain C58)).